Reading from the N-terminus, the 1069-residue chain is Protogenin B (1069 aa).

The signal sequence occupies residues 1–26 (MGSVRWKTHQQWLIIFWILSFSGVFG). Residues 27 to 936 (FSELWFSIEP…LYHIDEKSMS (910 aa)) lie on the Extracellular side of the membrane. Ig-like domains follow at residues 30 to 117 (LWFS…ARLT), 122 to 208 (LVFS…AELV), 221 to 308 (PLII…GNVT), and 312 to 396 (PSLV…SRLI). 2 disulfides stabilise this stretch: C51/C100 and C143/C191. Residues N81, N88, N180, and N229 are each glycosylated (N-linked (GlcNAc...) asparagine). The cysteines at positions 242 and 290 are disulfide-linked. N-linked (GlcNAc...) asparagine glycans are attached at residues N299 and N306. The interval 317–336 (KPESQTRPRAGTARFSCQAE) is disordered. Residues C333 and C380 are joined by a disulfide bond. Fibronectin type-III domains lie at 406-500 (APRN…TLED), 502-601 (PLRT…TPKT), 608-701 (PAPN…CPST), 711-804 (PPDH…TLLE), and 809-904 (PPES…VKGK). N-linked (GlcNAc...) asparagine glycans are attached at residues N458, N473, and N560. Residues 590–605 (PSAWSSHRTPKTSSAT) show a composition bias toward polar residues. The disordered stretch occupies residues 590–609 (PSAWSSHRTPKTSSATVPPA). Residues N618, N720, and N834 are each glycosylated (N-linked (GlcNAc...) asparagine). A helical transmembrane segment spans residues 937–957 (GIIVGVCIALSCIILCIFILL). At 958–1069 (SKTQTQKSAS…KTVLCYEDEA (112 aa)) the chain is on the cytoplasmic side.

This sequence belongs to the immunoglobulin superfamily. DCC family. As to expression, initially expressed in the ventral forebrain and ventral spinal cord. Later, also expressed in the midbrain and in parts of the diencephalon and hindbrain.

It is found in the membrane. Its function is as follows. May play a role in anteroposterior axis elongation. The sequence is that of Protogenin B from Danio rerio (Zebrafish).